The sequence spans 284 residues: MLYSRESRTTVLFLALVTSLTVLCHSVDVTTVFTTSTITEITTVTAAPQPQNKAETALNTATNIIQTMQFLFNCAPFKWKGPLKITSCALNFIVLLLTAWGYLLKYLQENKLNSDADMEKMVGLGFGEMVGRIFGKGVGKAFTKMDITQKLVYPFEGSNRQKCLLMTVGENSIVPFHDLFTEICFDQYTLDSLSHHNHGSISILDAGSVSALGFADISSKMPSVSELYTLFGDYTIEVLGGITKLASTLNREDWQGERNGFAVLSRDRPNQTLLSVHMYSSSLL.

The first 24 residues, 1-24 (MLYSRESRTTVLFLALVTSLTVLC), serve as a signal peptide directing secretion. Topologically, residues 25–84 (HSVDVTTVFTTSTITEITTVTAAPQPQNKAETALNTATNIIQTMQFLFNCAPFKWKGPLK) are cytoplasmic. A helical membrane pass occupies residues 85-104 (ITSCALNFIVLLLTAWGYLL). Over 105-284 (KYLQENKLNS…SVHMYSSSLL (180 aa)) the chain is Extracellular. An N-linked (GlcNAc...) asparagine glycan is attached at Asn270.

To yeast YNL019c.

The protein resides in the cell membrane. This is an uncharacterized protein from Saccharomyces cerevisiae (strain ATCC 204508 / S288c) (Baker's yeast).